Reading from the N-terminus, the 1188-residue chain is uncharacterized protein (1188 aa).

Disordered regions lie at residues 126–468, 484–771, 790–823, and 847–1039; these read GDLR…SQME, EDRF…LYKP, ARGGAAGPGEPVEVKEPPGLPAKPPASAQPTDEL, and QRAQ…FSRF. 3 stretches are compositionally biased toward pro residues: residues 139-151, 159-193, and 208-240; these read IPPPPPGPAPGPP, GGSPLPSPPSTAPPPPPLLLEPPPPPSMAPPPPPV, and IPTPPDFIPPAPPLAFLAPPPPPVPAPAPPAPA. Phosphoserine is present on S260. Residues 322-331 are compositionally biased toward basic and acidic residues; that stretch reads EAPRKEEGAT. Pro residues predominate over residues 389–418; sequence TPPPAPPLPPPAPPLPPPAPPLPPAAPPLP. Positions 432-441 are enriched in low complexity; sequence KTPKSSSPAL. 2 stretches are compositionally biased toward basic and acidic residues: residues 501–514 and 566–583; these read KEGKKGPRLPEKET and IRNELEARLSSAAEKEAK. Positions 618 to 633 are enriched in low complexity; the sequence is LPPQSTTLLPTTSLQP. A compositionally biased stretch (pro residues) spans 640-652; it reads AIPPKATPEPAIP. T666 carries the phosphothreonine modification. Low complexity predominate over residues 689-703; that stretch reads PAIASTATTLPTTTS. Residues 875-893 show a composition bias toward polar residues; that stretch reads AEASSDSIFHSQGTPNSFT. Residues 920–931 are compositionally biased toward basic and acidic residues; sequence LGRDAEGTELSR. Over residues 986–1001 the composition is skewed to pro residues; sequence IPPPPEFSNDPEPPAP. Positions 1007-1019 are enriched in polar residues; it reads GRQSSPPRNNYSD. Positions 1026–1035 are enriched in low complexity; that stretch reads AGPGAPPALG. R1044 is modified (asymmetric dimethylarginine). Residues 1069–1160 are disordered; sequence GEPHRGPGLP…SPYTTTRYGS (92 aa). Omega-N-methylarginine is present on residues R1073 and R1084. R1157 carries the post-translational modification Asymmetric dimethylarginine.

This is an uncharacterized protein from Homo sapiens (Human).